The primary structure comprises 357 residues: tRNA N6-adenosine threonylcarbamoyltransferase (357 aa).

Positions 116 and 120 each coordinate Fe cation. Substrate is bound by residues 139-143 (LVSGG), Asp-172, Gly-185, and Asn-284. Residue Asp-312 coordinates Fe cation.

The protein belongs to the KAE1 / TsaD family. It depends on Fe(2+) as a cofactor.

It is found in the cytoplasm. The catalysed reaction is L-threonylcarbamoyladenylate + adenosine(37) in tRNA = N(6)-L-threonylcarbamoyladenosine(37) in tRNA + AMP + H(+). Functionally, required for the formation of a threonylcarbamoyl group on adenosine at position 37 (t(6)A37) in tRNAs that read codons beginning with adenine. Is involved in the transfer of the threonylcarbamoyl moiety of threonylcarbamoyl-AMP (TC-AMP) to the N6 group of A37, together with TsaE and TsaB. TsaD likely plays a direct catalytic role in this reaction. The chain is tRNA N6-adenosine threonylcarbamoyltransferase from Synechococcus sp. (strain CC9902).